Consider the following 317-residue polypeptide: Acetyl-coenzyme A carboxylase carboxyl transferase subunit alpha (317 aa).

A CoA carboxyltransferase C-terminal domain is found at 39 to 293 (RLKKKSISLT…KTSLAQGVAE (255 aa)).

The protein belongs to the AccA family. In terms of assembly, acetyl-CoA carboxylase is a heterohexamer composed of biotin carboxyl carrier protein (AccB), biotin carboxylase (AccC) and two subunits each of ACCase subunit alpha (AccA) and ACCase subunit beta (AccD).

The protein resides in the cytoplasm. The catalysed reaction is N(6)-carboxybiotinyl-L-lysyl-[protein] + acetyl-CoA = N(6)-biotinyl-L-lysyl-[protein] + malonyl-CoA. The protein operates within lipid metabolism; malonyl-CoA biosynthesis; malonyl-CoA from acetyl-CoA: step 1/1. Component of the acetyl coenzyme A carboxylase (ACC) complex. First, biotin carboxylase catalyzes the carboxylation of biotin on its carrier protein (BCCP) and then the CO(2) group is transferred by the carboxyltransferase to acetyl-CoA to form malonyl-CoA. This Marinobacter nauticus (strain ATCC 700491 / DSM 11845 / VT8) (Marinobacter aquaeolei) protein is Acetyl-coenzyme A carboxylase carboxyl transferase subunit alpha.